The chain runs to 898 residues: Translation initiation factor IF-2 (898 aa).

Disordered regions lie at residues 51-70 (RKSHGAEDEGSGKKITLKRK) and 114-303 (LAAE…KQHG). Basic and acidic residues-rich tracts occupy residues 114–171 (LAAE…EKSK) and 184–258 (PAKE…DDKG). Positions 398-567 (HRAPVVTIMG…LLQSELLELQ (170 aa)) constitute a tr-type G domain. Positions 407–414 (GHVDHGKT) are G1. Position 407 to 414 (407 to 414 (GHVDHGKT)) interacts with GTP. The G2 stretch occupies residues 432 to 436 (GITQH). A G3 region spans residues 453–456 (DTPG). GTP-binding positions include 453 to 457 (DTPGH) and 507 to 510 (NKID). The segment at 507–510 (NKID) is G4. Residues 543–545 (SAH) are G5.

Belongs to the TRAFAC class translation factor GTPase superfamily. Classic translation factor GTPase family. IF-2 subfamily.

Its subcellular location is the cytoplasm. In terms of biological role, one of the essential components for the initiation of protein synthesis. Protects formylmethionyl-tRNA from spontaneous hydrolysis and promotes its binding to the 30S ribosomal subunits. Also involved in the hydrolysis of GTP during the formation of the 70S ribosomal complex. This Alcanivorax borkumensis (strain ATCC 700651 / DSM 11573 / NCIMB 13689 / SK2) protein is Translation initiation factor IF-2.